The primary structure comprises 419 residues: Mitogen-activated protein kinase pmk-2 (419 aa).

Residues 49–350 (YNSLKPLGEG…VSSALRHDYL (302 aa)) enclose the Protein kinase domain. ATP-binding positions include 55-63 (LGEGAYGVV) and Lys78. Residue Asp210 is the Proton acceptor of the active site. Thr222 bears the Phosphothreonine mark. A TXY motif is present at residues 222 to 224 (TGY). Tyr224 is subject to Phosphotyrosine.

The protein belongs to the protein kinase superfamily. CMGC Ser/Thr protein kinase family. MAP kinase subfamily. Requires Mg(2+) as cofactor. In terms of processing, dually phosphorylated on Thr-222 and Tyr-224, which activates the enzyme.

Its subcellular location is the cytoplasm. The catalysed reaction is L-seryl-[protein] + ATP = O-phospho-L-seryl-[protein] + ADP + H(+). The enzyme catalyses L-threonyl-[protein] + ATP = O-phospho-L-threonyl-[protein] + ADP + H(+). With respect to regulation, activated by phosphorylation on threonine and tyrosine. Inhibited by pyridinyl-imidazole related compounds. Its function is as follows. Responds to activation by environmental stress and pro-inflammatory cytokines by phosphorylating downstream targets. The sequence is that of Mitogen-activated protein kinase pmk-2 (pmk-2) from Caenorhabditis elegans.